Consider the following 396-residue polypeptide: 1-deoxy-D-xylulose 5-phosphate reductoisomerase (396 aa).

The NADPH site is built by T10, G11, S12, I13, G36, K37, N38, and N124. 1-deoxy-D-xylulose 5-phosphate is bound at residue K125. E126 provides a ligand contact to NADPH. D150 serves as a coordination point for Mn(2+). 4 residues coordinate 1-deoxy-D-xylulose 5-phosphate: S151, E152, S186, and H209. E152 serves as a coordination point for Mn(2+). G215 contributes to the NADPH binding site. 1-deoxy-D-xylulose 5-phosphate is bound by residues S222, N227, K228, and E231. E231 provides a ligand contact to Mn(2+).

The protein belongs to the DXR family. Mg(2+) serves as cofactor. It depends on Mn(2+) as a cofactor.

It catalyses the reaction 2-C-methyl-D-erythritol 4-phosphate + NADP(+) = 1-deoxy-D-xylulose 5-phosphate + NADPH + H(+). It functions in the pathway isoprenoid biosynthesis; isopentenyl diphosphate biosynthesis via DXP pathway; isopentenyl diphosphate from 1-deoxy-D-xylulose 5-phosphate: step 1/6. Catalyzes the NADPH-dependent rearrangement and reduction of 1-deoxy-D-xylulose-5-phosphate (DXP) to 2-C-methyl-D-erythritol 4-phosphate (MEP). In Haemophilus ducreyi (strain 35000HP / ATCC 700724), this protein is 1-deoxy-D-xylulose 5-phosphate reductoisomerase.